A 231-amino-acid polypeptide reads, in one-letter code: DNA mismatch repair protein MutH (231 aa).

The protein belongs to the MutH family.

It is found in the cytoplasm. In terms of biological role, sequence-specific endonuclease that cleaves unmethylated GATC sequences. It is involved in DNA mismatch repair. The polypeptide is DNA mismatch repair protein MutH (Salmonella typhi).